The sequence spans 289 residues: Myoblast determination protein 1 homolog A (289 aa).

Positions 95–146 constitute a bHLH domain; the sequence is DRRKAATMRERRRLSKVNEAFETLKRYTSTNPNQRLPKVEILRNAIRYIESL. The tract at residues 165-212 is disordered; sequence SGDSDASSPRSNCSDGMMDYNSPPCGSRRRNSYDSSFYSDSPNDSRLG. 2 stretches are compositionally biased toward polar residues: residues 168 to 178 and 197 to 208; these read SDASSPRSNCS and YDSSFYSDSPND.

As to quaternary structure, efficient DNA binding requires dimerization with another bHLH protein.

It localises to the nucleus. In terms of biological role, may act as a transcriptional activator that promotes transcription of muscle-specific target genes and plays a role in muscle differentiation. This is Myoblast determination protein 1 homolog A (myod1-a) from Xenopus laevis (African clawed frog).